A 238-amino-acid polypeptide reads, in one-letter code: LexA repressor (238 aa).

Residues 26 to 46 (FDEMKDALDLASKSGIHRLIT) constitute a DNA-binding region (H-T-H motif). Catalysis depends on for autocatalytic cleavage activity residues serine 158 and lysine 196.

It belongs to the peptidase S24 family. In terms of assembly, homodimer.

The enzyme catalyses Hydrolysis of Ala-|-Gly bond in repressor LexA.. Its function is as follows. Represses a number of genes involved in the response to DNA damage (SOS response), including recA and lexA. In the presence of single-stranded DNA, RecA interacts with LexA causing an autocatalytic cleavage which disrupts the DNA-binding part of LexA, leading to derepression of the SOS regulon and eventually DNA repair. This Rhizobium meliloti (strain 1021) (Ensifer meliloti) protein is LexA repressor.